The following is a 233-amino-acid chain: Orotidine 5'-phosphate decarboxylase (233 aa).

Substrate is bound by residues Asp-9, Lys-31, 58-67 (DLKLHDIPNT), Thr-120, Arg-182, Gln-191, Gly-211, and Arg-212. Lys-60 acts as the Proton donor in catalysis.

It belongs to the OMP decarboxylase family. Type 1 subfamily. In terms of assembly, homodimer.

It catalyses the reaction orotidine 5'-phosphate + H(+) = UMP + CO2. The protein operates within pyrimidine metabolism; UMP biosynthesis via de novo pathway; UMP from orotate: step 2/2. Its function is as follows. Catalyzes the decarboxylation of orotidine 5'-monophosphate (OMP) to uridine 5'-monophosphate (UMP). This chain is Orotidine 5'-phosphate decarboxylase, found in Listeria innocua serovar 6a (strain ATCC BAA-680 / CLIP 11262).